Here is a 1130-residue protein sequence, read N- to C-terminus: Putative protein tag-278 (1130 aa).

3 disordered regions span residues 1 to 92 (MSRS…DIDN), 104 to 129 (VARESSRNTSRNNSPQPAGRETELKR), and 974 to 1130 (NELI…AWKF). 2 coiled-coil regions span residues 121 to 779 (AGRE…EEIK) and 805 to 1061 (EERE…ARAK). The span at 983-993 (RQTDESTSEPH) shows a compositional bias: basic and acidic residues. Residues 999–1011 (SITSHGVFQNFVS) show a composition bias toward polar residues. 2 stretches are compositionally biased toward basic and acidic residues: residues 1013-1057 (MKDK…EKSP) and 1068-1081 (RLRDRSPAKSKSDN). Low complexity predominate over residues 1082-1095 (LESTPSSSSRNLLS). Positions 1116–1130 (TKKDSSSEKRPAWKF) are enriched in basic and acidic residues.

This is Putative protein tag-278 (tag-278) from Caenorhabditis elegans.